The sequence spans 893 residues: MAVARSSRSAAATPRSGAEIRAAFLSFYEERGHKVMASASLIPEDPTVLLTIAGMLPFKPVFLGQQKRPAPRATSSQKCIRTNDIENVGRTARHHTFFEMLGNFSFGDYFKQQAIEWAWELSTDLFGIDPKHLVVSVFREDDEAEQIWRDVVGVNPKRIIRMDEADNFWASGPTGPCGPCSEIYYDFNPELGDEGIDLEDDDRFIEFYNLVFMQYNRDAEGTLTPLANRNIDTGLGLERMAQILQKVPNNYETDLIFPLIQAAADLAGVDYHQLDDAGQTSLKVIGDHSRAVTQLICDGVSASNLGRGYILRRLLRRVVRHGRLLGIHQPFLVTMGQASIALLKDAYPSVIERQEVILAELQREESRFLETLERGEKLLADVLESKPKQISGAQAFELYDTYGFPLELTQEIAEEHGLDVDLAGFEQAMEQQRQRAKAAAVSIDLTLQDAIDQVAADLNATSFEGYDLLVQSSSTVQALLVNGEAAASASDGDVVQVVLDNTPFYGEGGGQVGDRGLLVGDGPDGNGLIVVIEGVSRNRGVFVHSGRVQLGRLGVGDVVHGQVDRACRRRAQANHTATHLLQAALKQVVDEGIGQAGSLVNFERLRFDFHCPRAVKPEELEQIETLINGWISDAQSLEVNEMAIDQAKAAGAVAMFGEKYADVVRVVDVPGVSMELCGGTHVGNTAEIGLFKIVSESGVAAGIRRIEAVAGASVLAYLNEREVVVKQLGDRFKAQPGEIVERVVALQEELKNSQKALTAARSELAVAKSAALAVQAVAVGKHQLLVARLDGVNGDGLQGAALGLLDQLGDATAVVLGGLPDPSDQGKVILVAAFGKAVIATGQQAGKFIGAIAKLCGGGGGGRPNLAQAGGRDGAALDAALNTARAELKKTLG.

Zn(2+) is bound by residues His575, His579, Cys677, and His681.

This sequence belongs to the class-II aminoacyl-tRNA synthetase family. Zn(2+) is required as a cofactor.

The protein resides in the cytoplasm. It catalyses the reaction tRNA(Ala) + L-alanine + ATP = L-alanyl-tRNA(Ala) + AMP + diphosphate. In terms of biological role, catalyzes the attachment of alanine to tRNA(Ala) in a two-step reaction: alanine is first activated by ATP to form Ala-AMP and then transferred to the acceptor end of tRNA(Ala). Also edits incorrectly charged Ser-tRNA(Ala) and Gly-tRNA(Ala) via its editing domain. In Synechococcus sp. (strain CC9311), this protein is Alanine--tRNA ligase.